Here is a 739-residue protein sequence, read N- to C-terminus: Protein kinase C (739 aa).

The region spanning 1 to 117 (MFTGKLQIKV…SETAVQDLWV (117 aa)) is the C2 domain. Phorbol-ester/DAG-type zinc fingers lie at residues 176–226 (GHKF…VSKC) and 251–301 (PHRF…ANTC). Residues 408–665 (FNFIKVLGKG…ENEIRKHPFF (258 aa)) enclose the Protein kinase domain. Residues 414 to 422 (LGKGSFGKV) and K437 contribute to the ATP site. The Proton acceptor role is filled by D532. Residues 666 to 737 (AKLDWKELEK…VNPKFGPERK (72 aa)) enclose the AGC-kinase C-terminal domain.

It belongs to the protein kinase superfamily. AGC Ser/Thr protein kinase family. PKC subfamily.

The catalysed reaction is L-seryl-[protein] + ATP = O-phospho-L-seryl-[protein] + ADP + H(+). It catalyses the reaction L-threonyl-[protein] + ATP = O-phospho-L-threonyl-[protein] + ADP + H(+). Its function is as follows. PKC is activated by diacylglycerol which in turn phosphorylates a range of cellular proteins. PKC also serves as the receptor for phorbol esters, a class of tumor promoters. The sequence is that of Protein kinase C (Pkc98E) from Drosophila melanogaster (Fruit fly).